The sequence spans 435 residues: Adenylosuccinate synthetase (435 aa).

GTP-binding positions include 17-23 (GDEGKGK) and 45-47 (GHT). D18 acts as the Proton acceptor in catalysis. Mg(2+)-binding residues include D18 and G45. Residues 18 to 21 (DEGK), 43 to 46 (NAGH), T134, R148, Q229, T244, and R308 each bind IMP. H46 serves as the catalytic Proton donor. Residue 304-310 (SVTGRPR) coordinates substrate. GTP-binding positions include R310, 336-338 (KLD), and 418-420 (STG).

This sequence belongs to the adenylosuccinate synthetase family. As to quaternary structure, homodimer. It depends on Mg(2+) as a cofactor.

Its subcellular location is the cytoplasm. It catalyses the reaction IMP + L-aspartate + GTP = N(6)-(1,2-dicarboxyethyl)-AMP + GDP + phosphate + 2 H(+). Its pathway is purine metabolism; AMP biosynthesis via de novo pathway; AMP from IMP: step 1/2. Its function is as follows. Plays an important role in the de novo pathway of purine nucleotide biosynthesis. Catalyzes the first committed step in the biosynthesis of AMP from IMP. This chain is Adenylosuccinate synthetase, found in Bordetella parapertussis (strain 12822 / ATCC BAA-587 / NCTC 13253).